A 24-amino-acid chain; its full sequence is SEDETRLVKNLFSGYNKVVRPVNH.

Belongs to the ligand-gated ion channel (TC 1.A.9) family. Acetylcholine receptor (TC 1.A.9.1) subfamily. Alpha-1/CHRNA1 sub-subfamily. As to quaternary structure, one of the alpha chains that assemble within the acetylcholine receptor, a pentamer of two alpha chains, a beta, a delta, and a gamma or epsilon chains.

The protein localises to the postsynaptic cell membrane. The protein resides in the cell membrane. It catalyses the reaction K(+)(in) = K(+)(out). The enzyme catalyses Na(+)(in) = Na(+)(out). Its function is as follows. Upon acetylcholine binding, the AChR responds by an extensive change in conformation that affects all subunits and leads to opening of an ion-conducting channel across the plasma membrane. The protein is Acetylcholine receptor subunit alpha (chrna1) of Electrophorus electricus (Electric eel).